We begin with the raw amino-acid sequence, 130 residues long: Fluoride-specific ion channel FluC (130 aa).

The next 4 membrane-spanning stretches (helical) occupy residues 3–23 (FVFLWAALGGAIGSSLRYFVG), 39–59 (GTFSVNIIGCFVIGFMGHLAV), 67–87 (FGIFFVTGVLGGFTTFSSYGL), and 102–122 (VSYALGTNILGLTGVAIGWFL). Residues Gly77 and Thr80 each contribute to the Na(+) site.

It belongs to the fluoride channel Fluc/FEX (TC 1.A.43) family.

It localises to the cell inner membrane. The catalysed reaction is fluoride(in) = fluoride(out). With respect to regulation, na(+) is not transported, but it plays an essential structural role and its presence is essential for fluoride channel function. Its function is as follows. Fluoride-specific ion channel. Important for reducing fluoride concentration in the cell, thus reducing its toxicity. The protein is Fluoride-specific ion channel FluC of Helicobacter pylori (strain ATCC 700392 / 26695) (Campylobacter pylori).